The chain runs to 526 residues: Keratin, type I cytoskeletal 10 (526 aa).

Residues 1–16 (MSVRFSSNSRQYSSAR) are compositionally biased toward low complexity. The tract at residues 1 to 40 (MSVRFSSNSRQYSSARSGGGGGGGGGGSSIRVSSTKSSLG) is disordered. Residues 1 to 144 (MSVRFSSNSR…GDGGGLLSGN (144 aa)) are head. Residues Ser-17, Ser-38, Ser-49, Ser-52, and Ser-169 each carry the phosphoserine modification. The segment covering 17–28 (SGGGGGGGGGGS) has biased composition (gly residues). The coil 1A stretch occupies residues 145–180 (EKVTMQNLNDRLASYMNKVRDLEESNYELEGKIKEW). Residues 145–459 (EKVTMQNLND…SLLEGEGGYV (315 aa)) enclose the IF rod domain. Residues 181–201 (YEKHGNSSQREPRDYSKYYKT) are linker 1. The interval 202–293 (IEDLKGQIVN…KNHEEEMKDL (92 aa)) is coil 1B. The linker 12 stretch occupies residues 294 to 316 (QNVSTGDVNVEMNAAPGVDLTQL). The interval 317–455 (LNNMRNQYEQ…QTYRSLLEGE (139 aa)) is coil 2. Residues 456–526 (GGYVGNLQIT…IESETKKHFY (71 aa)) form a tail region.

It belongs to the intermediate filament family. In terms of assembly, heterotetramer of two type I and two type II keratins. Heterodimer with KRT1. Two heterodimers of KRT1 and KRT10 form a heterotetramer. The KRT10 subunit in the heterotetramer is probably disulfide-linked.

Its subcellular location is the secreted. The protein localises to the extracellular space. The protein resides in the cell surface. It localises to the cytoplasm. In terms of biological role, plays a role in the establishment of the epidermal barrier on plantar skin. Involved in the maintenance of cell layer development and keratin filament bundles in suprabasal cells of the epithelium. This is Keratin, type I cytoskeletal 10 from Rattus norvegicus (Rat).